Here is a 457-residue protein sequence, read N- to C-terminus: Solute carrier family 38 member 6 (457 aa).

M1 carries the post-translational modification N-acetylmethionine. Residues S4 and S7 each carry the phosphoserine modification. The next 5 helical transmembrane spans lie at 48-68 (FGLS…LGLA), 70-90 (VMAN…ALLA), 112-132 (LGLF…IIIQ), 171-191 (LLII…KIGF), and 192-212 (LGYT…VVVI). Cysteines 219 and 239 form a disulfide. The next 6 helical transmembrane spans lie at 251–271 (VYAI…LPIY), 289–309 (AIAL…LTFY), 328–348 (VIVM…APLI), 372–392 (SLTT…VPDI), 395–415 (VFGV…PGLF), and 432–452 (ALFL…LIIF).

The protein belongs to the amino acid/polyamine transporter 2 family. Expressed exclusively in neurons and not in astrocytes and glia cells. Highly expressed in the synapse. Highly expressed in glutamatergic neurons. Primarily expressed in excitatory neurons, with some minor expression in inhibitory neurons.

The protein resides in the cell membrane. It is found in the synapse. It catalyses the reaction L-glutamine(out) = L-glutamine(in). It carries out the reaction L-glutamate(out) = L-glutamate(in). Amino acid transporter with an apparent selectivity for L-glutamine and L-glutamate. May facilitate glutamine uptake in excitatory neurons. The transport mechanism remains to be elucidated. This chain is Solute carrier family 38 member 6, found in Mus musculus (Mouse).